The primary structure comprises 390 residues: S-adenosylmethionine synthase 2 (390 aa).

Glu-9 provides a ligand contact to Mg(2+). An ATP-binding site is contributed by His-15. Glu-43 is a K(+) binding site. The L-methionine site is built by Glu-56 and Gln-99. Residues 167-169, 235-238, Asp-246, 252-253, Ala-269, Lys-273, and Lys-277 contribute to the ATP site; these read DGK, SGRF, and RK. An L-methionine-binding site is contributed by Asp-246. Residue Lys-277 coordinates L-methionine.

The protein belongs to the AdoMet synthase family. In terms of assembly, homotetramer. Requires Mn(2+) as cofactor. The cofactor is Mg(2+). It depends on Co(2+) as a cofactor. K(+) is required as a cofactor.

Its subcellular location is the cytoplasm. It carries out the reaction L-methionine + ATP + H2O = S-adenosyl-L-methionine + phosphate + diphosphate. Its pathway is amino-acid biosynthesis; S-adenosyl-L-methionine biosynthesis; S-adenosyl-L-methionine from L-methionine: step 1/1. Catalyzes the formation of S-adenosylmethionine from methionine and ATP. The reaction comprises two steps that are both catalyzed by the same enzyme: formation of S-adenosylmethionine (AdoMet) and triphosphate, and subsequent hydrolysis of the triphosphate. The sequence is that of S-adenosylmethionine synthase 2 (METK2) from Solanum tuberosum (Potato).